The chain runs to 132 residues: uncharacterized protein (132 aa).

Residues 1 to 35 (MSFEYRHYKREAKICTCRGGWAHVLLCIGVSQGAC) form the signal peptide. Residues 91–132 (AHPGSHSDQPPGVPSRRKSRLERWSPSVSRSTSPPTEAPFCL) are disordered. Low complexity predominate over residues 115 to 125 (SPSVSRSTSPP).

Its subcellular location is the secreted. This is an uncharacterized protein from Homo sapiens (Human).